Reading from the N-terminus, the 282-residue chain is Acetyl-coenzyme A carboxylase carboxyl transferase subunit beta (282 aa).

The region spanning 28 to 282 is the CoA carboxyltransferase N-terminal domain; the sequence is IMTKCPSCRT…TKILDIHHVS (255 aa). The Zn(2+) site is built by cysteine 32, cysteine 35, cysteine 51, and cysteine 54. The C4-type zinc finger occupies 32–54; sequence CPSCRTIMYTKELKKNLYVCDSC.

It belongs to the AccD/PCCB family. Acetyl-CoA carboxylase is a heterohexamer composed of biotin carboxyl carrier protein (AccB), biotin carboxylase (AccC) and two subunits each of ACCase subunit alpha (AccA) and ACCase subunit beta (AccD). It depends on Zn(2+) as a cofactor.

Its subcellular location is the cytoplasm. The catalysed reaction is N(6)-carboxybiotinyl-L-lysyl-[protein] + acetyl-CoA = N(6)-biotinyl-L-lysyl-[protein] + malonyl-CoA. It functions in the pathway lipid metabolism; malonyl-CoA biosynthesis; malonyl-CoA from acetyl-CoA: step 1/1. In terms of biological role, component of the acetyl coenzyme A carboxylase (ACC) complex. Biotin carboxylase (BC) catalyzes the carboxylation of biotin on its carrier protein (BCCP) and then the CO(2) group is transferred by the transcarboxylase to acetyl-CoA to form malonyl-CoA. This Halalkalibacterium halodurans (strain ATCC BAA-125 / DSM 18197 / FERM 7344 / JCM 9153 / C-125) (Bacillus halodurans) protein is Acetyl-coenzyme A carboxylase carboxyl transferase subunit beta.